The following is a 396-amino-acid chain: Elongation factor Tu (396 aa).

Residues 10–206 form the tr-type G domain; it reads KLHVNVGTIG…ALDTHIPNPE (197 aa). The interval 19–26 is G1; sequence GHVDHGKT. 19–26 is a GTP binding site; sequence GHVDHGKT. Mg(2+) is bound at residue T26. Positions 60-64 are G2; the sequence is GITIS. Residues 81–84 form a G3 region; it reads DCPG. GTP is bound by residues 81–85 and 136–139; these read DCPGH and NKAD. The segment at 136–139 is G4; sequence NKAD. The segment at 174-176 is G5; it reads SAL.

The protein belongs to the TRAFAC class translation factor GTPase superfamily. Classic translation factor GTPase family. EF-Tu/EF-1A subfamily. Monomer.

The protein resides in the cytoplasm. It carries out the reaction GTP + H2O = GDP + phosphate + H(+). In terms of biological role, GTP hydrolase that promotes the GTP-dependent binding of aminoacyl-tRNA to the A-site of ribosomes during protein biosynthesis. In Xylella fastidiosa (strain 9a5c), this protein is Elongation factor Tu.